Here is a 515-residue protein sequence, read N- to C-terminus: Maturase K (515 aa).

Belongs to the intron maturase 2 family. MatK subfamily.

The protein resides in the plastid. It is found in the chloroplast. Functionally, usually encoded in the trnK tRNA gene intron. Probably assists in splicing its own and other chloroplast group II introns. In Pinus banksiana (Jack pine), this protein is Maturase K.